The primary structure comprises 837 residues: Striatin-interacting protein 1 (837 aa).

N-acetylmethionine is present on Met-1. 2 disordered regions span residues 1 to 67 (MEPA…ESPD) and 333 to 423 (AASP…KGLP). A compositionally biased stretch (pro residues) spans 18–35 (PQPPPPPPPATAQPPPGA). Low complexity predominate over residues 36–46 (PRAAAGLLPGG). Positions 47–60 (KAREFNRNQRKDSE) are enriched in basic and acidic residues. Phosphoserine is present on residues Ser-59, Ser-335, and Ser-339. The span at 333 to 343 (AASPPASASDS) shows a compositional bias: low complexity. The span at 356 to 377 (KALIKQDNLDAFNERDPYKADD) shows a compositional bias: basic and acidic residues. Residues 378-391 (SREEEEENDDDNSL) are compositionally biased toward acidic residues. A Phosphoserine modification is found at Ser-788. The required for STRIPAK core complex formation stretch occupies residues 796-837 (DNCLQSVLGQRVDLPEDFQMNYDLWLEREVFSKPISWEELLQ).

It belongs to the STRIP family. In terms of assembly, part of the core of STRIPAK complexes composed of PP2A catalytic and scaffolding subunits, the striatins (PP2A regulatory subunits), the striatin-associated proteins MOB4, STRIP1 and STRIP2, PDCD10 and members of the STE20 kinases, such as STK24 and STK26. The STRIPAK complex can be extended by adapter proteins such as SLMAP:SIKE1, CTTNBP2 or CTTNBP2NL. Interacts with CDC42BPB. Interacts with CTTNBP2NL.

Its subcellular location is the cytoplasm. Its function is as follows. Plays a role in the regulation of cell morphology and cytoskeletal organization. Required in the cortical actin filament dynamics and cell shape. Part of the striatin-interacting phosphatase and kinase (STRIPAK) complexes. STRIPAK complexes have critical roles in protein (de)phosphorylation and are regulators of multiple signaling pathways including Hippo, MAPK, nuclear receptor and cytoskeleton remodeling. Different types of STRIPAK complexes are involved in a variety of biological processes such as cell growth, differentiation, apoptosis, metabolism and immune regulation. The polypeptide is Striatin-interacting protein 1 (STRIP1) (Pongo abelii (Sumatran orangutan)).